The chain runs to 310 residues: Methionyl-tRNA formyltransferase (310 aa).

Residue 111 to 114 (SLLP) coordinates (6S)-5,6,7,8-tetrahydrofolate.

The protein belongs to the Fmt family.

It catalyses the reaction L-methionyl-tRNA(fMet) + (6R)-10-formyltetrahydrofolate = N-formyl-L-methionyl-tRNA(fMet) + (6S)-5,6,7,8-tetrahydrofolate + H(+). Attaches a formyl group to the free amino group of methionyl-tRNA(fMet). The formyl group appears to play a dual role in the initiator identity of N-formylmethionyl-tRNA by promoting its recognition by IF2 and preventing the misappropriation of this tRNA by the elongation apparatus. The protein is Methionyl-tRNA formyltransferase of Afipia carboxidovorans (strain ATCC 49405 / DSM 1227 / KCTC 32145 / OM5) (Oligotropha carboxidovorans).